Reading from the N-terminus, the 201-residue chain is 3-isopropylmalate dehydratase small subunit (201 aa).

It belongs to the LeuD family. LeuD type 1 subfamily. Heterodimer of LeuC and LeuD.

The enzyme catalyses (2R,3S)-3-isopropylmalate = (2S)-2-isopropylmalate. It participates in amino-acid biosynthesis; L-leucine biosynthesis; L-leucine from 3-methyl-2-oxobutanoate: step 2/4. In terms of biological role, catalyzes the isomerization between 2-isopropylmalate and 3-isopropylmalate, via the formation of 2-isopropylmaleate. This Shewanella halifaxensis (strain HAW-EB4) protein is 3-isopropylmalate dehydratase small subunit.